Here is a 314-residue protein sequence, read N- to C-terminus: Olfactory receptor 5G29 (314 aa).

Over 1–25 (MEEKNQTIVMEFFFLGLTDHLYQKI) the chain is Extracellular. Asparagine 5 carries an N-linked (GlcNAc...) asparagine glycan. The helical transmembrane segment at 26–46 (ALFITILFVYLVTLGGNLGMI) threads the bilayer. Residues 47-54 (TLIWADPR) lie on the Cytoplasmic side of the membrane. A helical transmembrane segment spans residues 55–75 (LHTPMYFFLSHLSFVDMCSSS). Over 76–99 (SIAPKMLCDIFAEEKRISFMGCAA) the chain is Extracellular. A disulfide bond links cysteine 97 and cysteine 189. The chain crosses the membrane as a helical span at residues 100–120 (QMWFFGFFVGTECFLLASMAY). Topologically, residues 121 to 133 (DRYTAICKPLLYT) are cytoplasmic. Residues 134–154 (LLMSQRVCVHLVVGPYVFAII) traverse the membrane as a helical segment. Residues 155–196 (NITTHTTLAFCLPFCGSNTINHFFCDVSPLLSLACADSWVNK) are Extracellular-facing. Residues 197-217 (VVLFVLSGAIGVFSGLIIIVS) traverse the membrane as a helical segment. Topologically, residues 218 to 237 (YVSILMTIFKIQTADGKQKA) are cytoplasmic. The chain crosses the membrane as a helical span at residues 238–258 (FSTCSSHLSAVSILYGTLFFI). At 259–271 (YVRPSASFSLNIN) the chain is on the extracellular side. The chain crosses the membrane as a helical span at residues 272–292 (KMISLFYTVVIPMLNPLIYSL). At 293 to 312 (RNKEVKGAFRRKVQKKHFPA) the chain is on the cytoplasmic side.

Belongs to the G-protein coupled receptor 1 family.

The protein localises to the cell membrane. Functionally, potential odorant receptor. The chain is Olfactory receptor 5G29 from Mus musculus (Mouse).